Consider the following 344-residue polypeptide: Dihydroorotate dehydrogenase (quinone) (344 aa).

Residues 64–68 (AGLDK) and Thr88 contribute to the FMN site. Lys68 serves as a coordination point for substrate. 113–117 (NRMGF) is a substrate binding site. The FMN site is built by Asn144 and Asn177. Asn177 serves as a coordination point for substrate. Ser180 serves as the catalytic Nucleophile. Asn182 is a substrate binding site. FMN-binding residues include Lys222 and Thr250. 251-252 (NT) contacts substrate. FMN-binding positions include Gly273, Gly302, and 323 to 324 (YS).

It belongs to the dihydroorotate dehydrogenase family. Type 2 subfamily. In terms of assembly, monomer. Requires FMN as cofactor.

The protein resides in the cell membrane. It catalyses the reaction (S)-dihydroorotate + a quinone = orotate + a quinol. It functions in the pathway pyrimidine metabolism; UMP biosynthesis via de novo pathway; orotate from (S)-dihydroorotate (quinone route): step 1/1. Its function is as follows. Catalyzes the conversion of dihydroorotate to orotate with quinone as electron acceptor. The polypeptide is Dihydroorotate dehydrogenase (quinone) (Polynucleobacter necessarius subsp. necessarius (strain STIR1)).